A 328-amino-acid polypeptide reads, in one-letter code: Formimidoylglutamase (328 aa).

The Mn(2+) site is built by histidine 133, aspartate 159, histidine 161, aspartate 163, aspartate 253, and aspartate 255.

This sequence belongs to the arginase family. It depends on Mn(2+) as a cofactor.

The enzyme catalyses N-formimidoyl-L-glutamate + H2O = formamide + L-glutamate. The protein operates within amino-acid degradation; L-histidine degradation into L-glutamate; L-glutamate from N-formimidoyl-L-glutamate (hydrolase route): step 1/1. Functionally, catalyzes the conversion of N-formimidoyl-L-glutamate to L-glutamate and formamide. The polypeptide is Formimidoylglutamase (Streptococcus pyogenes serotype M18 (strain MGAS8232)).